A 190-amino-acid chain; its full sequence is Elongation factor P (190 aa).

Belongs to the elongation factor P family.

Its subcellular location is the cytoplasm. Its pathway is protein biosynthesis; polypeptide chain elongation. In terms of biological role, involved in peptide bond synthesis. Stimulates efficient translation and peptide-bond synthesis on native or reconstituted 70S ribosomes in vitro. Probably functions indirectly by altering the affinity of the ribosome for aminoacyl-tRNA, thus increasing their reactivity as acceptors for peptidyl transferase. This chain is Elongation factor P, found in Pseudomonas fluorescens (strain ATCC BAA-477 / NRRL B-23932 / Pf-5).